We begin with the raw amino-acid sequence, 248 residues long: Putative imidazole glycerol phosphate synthase subunit hisF2 (248 aa).

Asp-129 is an active-site residue.

The protein belongs to the HisA/HisF family. Heterodimer of HisH and HisF.

The protein resides in the cytoplasm. It catalyses the reaction 5-[(5-phospho-1-deoxy-D-ribulos-1-ylimino)methylamino]-1-(5-phospho-beta-D-ribosyl)imidazole-4-carboxamide + L-glutamine = D-erythro-1-(imidazol-4-yl)glycerol 3-phosphate + 5-amino-1-(5-phospho-beta-D-ribosyl)imidazole-4-carboxamide + L-glutamate + H(+). Its pathway is amino-acid biosynthesis; L-histidine biosynthesis; L-histidine from 5-phospho-alpha-D-ribose 1-diphosphate: step 5/9. Its function is as follows. IGPS catalyzes the conversion of PRFAR and glutamine to IGP, AICAR and glutamate. The HisF subunit catalyzes the cyclization activity that produces IGP and AICAR from PRFAR using the ammonia provided by the HisH subunit. The polypeptide is Putative imidazole glycerol phosphate synthase subunit hisF2 (hisF2) (Campylobacter jejuni subsp. jejuni serotype O:2 (strain ATCC 700819 / NCTC 11168)).